The sequence spans 95 residues: Aspartyl/glutamyl-tRNA(Asn/Gln) amidotransferase subunit C (95 aa).

This sequence belongs to the GatC family. In terms of assembly, heterotrimer of A, B and C subunits.

The catalysed reaction is L-glutamyl-tRNA(Gln) + L-glutamine + ATP + H2O = L-glutaminyl-tRNA(Gln) + L-glutamate + ADP + phosphate + H(+). It carries out the reaction L-aspartyl-tRNA(Asn) + L-glutamine + ATP + H2O = L-asparaginyl-tRNA(Asn) + L-glutamate + ADP + phosphate + 2 H(+). Functionally, allows the formation of correctly charged Asn-tRNA(Asn) or Gln-tRNA(Gln) through the transamidation of misacylated Asp-tRNA(Asn) or Glu-tRNA(Gln) in organisms which lack either or both of asparaginyl-tRNA or glutaminyl-tRNA synthetases. The reaction takes place in the presence of glutamine and ATP through an activated phospho-Asp-tRNA(Asn) or phospho-Glu-tRNA(Gln). The chain is Aspartyl/glutamyl-tRNA(Asn/Gln) amidotransferase subunit C from Trichlorobacter lovleyi (strain ATCC BAA-1151 / DSM 17278 / SZ) (Geobacter lovleyi).